A 241-amino-acid polypeptide reads, in one-letter code: NAD(P)H-quinone oxidoreductase subunit K (241 aa).

Residues cysteine 60, cysteine 61, cysteine 125, and cysteine 156 each coordinate [4Fe-4S] cluster. Positions 220–241 are disordered; sequence SSQKEKITELPEKTEITNTEKD. Residues 222–241 show a composition bias toward basic and acidic residues; the sequence is QKEKITELPEKTEITNTEKD.

The protein belongs to the complex I 20 kDa subunit family. In terms of assembly, NDH-1 can be composed of about 15 different subunits; different subcomplexes with different compositions have been identified which probably have different functions. It depends on [4Fe-4S] cluster as a cofactor.

It is found in the cellular thylakoid membrane. The catalysed reaction is a plastoquinone + NADH + (n+1) H(+)(in) = a plastoquinol + NAD(+) + n H(+)(out). It catalyses the reaction a plastoquinone + NADPH + (n+1) H(+)(in) = a plastoquinol + NADP(+) + n H(+)(out). In terms of biological role, NDH-1 shuttles electrons from an unknown electron donor, via FMN and iron-sulfur (Fe-S) centers, to quinones in the respiratory and/or the photosynthetic chain. The immediate electron acceptor for the enzyme in this species is believed to be plastoquinone. Couples the redox reaction to proton translocation, and thus conserves the redox energy in a proton gradient. Cyanobacterial NDH-1 also plays a role in inorganic carbon-concentration. In Prochlorococcus marinus (strain MIT 9215), this protein is NAD(P)H-quinone oxidoreductase subunit K.